The primary structure comprises 511 residues: Cysteine--tRNA ligase 2, cytoplasmic (511 aa).

C34 is a binding site for Zn(2+). Residues 36 to 46 (ITAYDFSHIGH) carry the 'HIGH' region motif. Residues C214, H239, and E243 each contribute to the Zn(2+) site. A 'KMSKS' region motif is present at residues 271-275 (KMAKS). Position 274 (K274) interacts with ATP. TPR repeat units lie at residues 315–348 (ESSS…DGGK) and 368–401 (SKML…LKKM).

Belongs to the class-I aminoacyl-tRNA synthetase family. Zn(2+) is required as a cofactor.

The protein localises to the cytoplasm. Its subcellular location is the cytosol. It carries out the reaction tRNA(Cys) + L-cysteine + ATP = L-cysteinyl-tRNA(Cys) + AMP + diphosphate. The sequence is that of Cysteine--tRNA ligase 2, cytoplasmic from Arabidopsis thaliana (Mouse-ear cress).